Consider the following 375-residue polypeptide: uncharacterized protein (375 aa).

Belongs to the IMPDH/GMPR family.

This is an uncharacterized protein from Mycobacterium tuberculosis (strain CDC 1551 / Oshkosh).